The chain runs to 115 residues: Large ribosomal subunit protein P2 (115 aa).

M1 carries the N-acetylmethionine modification. A phosphoserine mark is found at S17 and S19. K21 is subject to N6-acetyllysine; alternate. K21 bears the N6-succinyllysine; alternate mark. The span at 69 to 90 (GAXAVAAAPGSXAPAAGSAPAA) shows a compositional bias: low complexity. The segment at 69–115 (GAXAVAAAPGSXAPAAGSAPAAAEEKKEEKKEESEESDDDMGFGLFD) is disordered. 2 positions are modified to phosphoserine: S79 and S86. Residues 91–101 (AEEKKEEKKEE) are compositionally biased toward basic and acidic residues. Residues S102 and S105 each carry the phosphoserine modification.

Belongs to the eukaryotic ribosomal protein P1/P2 family. Heterodimer with RPLP1 at the lateral ribosomal stalk of the large ribosomal subunit.

Plays an important role in the elongation step of protein synthesis. The sequence is that of Large ribosomal subunit protein P2 (RPLP2) from Sus scrofa (Pig).